We begin with the raw amino-acid sequence, 408 residues long: Lipoate--protein ligase 1 (408 aa).

The transit peptide at 1-18 (MKRIFRLVRRCHYSTEKR) directs the protein to the mitochondrion. Residues 60–242 (KFNEPILFLW…EFTKFYEQNY (183 aa)) enclose the BPL/LPL catalytic domain. Arg102, Gly107, and Tyr110 together coordinate ATP. Position 107 (Gly107) interacts with (R)-lipoate. Position 153 (Asp153) interacts with Mg(2+). An ATP-binding site is contributed by Lys160. Lys160 contributes to the (R)-lipoate binding site.

Belongs to the LplA family.

The protein localises to the mitochondrion. The catalysed reaction is L-lysyl-[lipoyl-carrier protein] + (R)-lipoate + ATP = N(6)-[(R)-lipoyl]-L-lysyl-[lipoyl-carrier protein] + AMP + diphosphate + H(+). It carries out the reaction (R)-dihydrolipoate + L-lysyl-[lipoyl-carrier protein] + ATP = N(6)-[(R)-dihydrolipoyl]-L-lysyl-[lipoyl-carrier protein] + AMP + diphosphate + H(+). The enzyme catalyses (R)-dihydrolipoate + ATP + H(+) = N(6)-[(R)-dihydrolipoyl]-5'-AMP + diphosphate. It catalyses the reaction N(6)-[(R)-dihydrolipoyl]-5'-AMP + L-lysyl-[lipoyl-carrier protein] = N(6)-[(R)-dihydrolipoyl]-L-lysyl-[lipoyl-carrier protein] + AMP + 2 H(+). Its pathway is protein modification; protein lipoylation via exogenous pathway; protein N(6)-(lipoyl)lysine from lipoate: step 1/2. The protein operates within protein modification; protein lipoylation via exogenous pathway; protein N(6)-(lipoyl)lysine from lipoate: step 2/2. With respect to regulation, inhibited by the lipoate analog 8-bromo-octanoate (BrO). Catalytic activity is increased in the presence of Mg(2+). Functionally, catalyzes both the ATP-dependent activation of exogenously supplied lipoate to lipoyl-AMP and the transfer of the activated lipoyl onto the lipoyl domains of lipoate-dependent enzymes. In the mitochondrion, functions as a redox switch between two lipoylation routes. Senses the oxidation state of lipoate and determines which downstream enzymes will be lipoylated. In low reducing conditions, uses lipoate in its oxidized ring form to lipoylate glycine cleavage system H-protein GCVH. In high reducing conditions and together with LipL2, uses reduced lipoate (dihydrolipoate) to lipoylate the E2 component of the branched chain alpha-ketoacid dehydrogenase complex BCKDH-E2/BCDH and the E2 component of the alpha-ketoglutarate dehydrogenase complex KDH. LipL1 is responsible for catalysing the activation of lipoate, forming lipoyl-AMP while LipL2 is required but is not capable of catalyzing this reaction. The chain is Lipoate--protein ligase 1 from Plasmodium falciparum (isolate 3D7).